Here is a 462-residue protein sequence, read N- to C-terminus: Asparagine--tRNA ligase (462 aa).

The protein belongs to the class-II aminoacyl-tRNA synthetase family. As to quaternary structure, homodimer.

It localises to the cytoplasm. The enzyme catalyses tRNA(Asn) + L-asparagine + ATP = L-asparaginyl-tRNA(Asn) + AMP + diphosphate + H(+). This Synechocystis sp. (strain ATCC 27184 / PCC 6803 / Kazusa) protein is Asparagine--tRNA ligase.